A 442-amino-acid polypeptide reads, in one-letter code: 3-phosphoshikimate 1-carboxyvinyltransferase (442 aa).

3-phosphoshikimate is bound by residues Lys25, Ser26, and Arg30. Lys25 contributes to the phosphoenolpyruvate binding site. Phosphoenolpyruvate contacts are provided by Gly97 and Arg125. 3-phosphoshikimate-binding residues include Ser170, Gln172, Asp323, and Lys350. Gln172 is a binding site for phosphoenolpyruvate. Asp323 acts as the Proton acceptor in catalysis. Phosphoenolpyruvate is bound by residues Arg354 and Arg399.

It belongs to the EPSP synthase family. Monomer.

The protein resides in the cytoplasm. It catalyses the reaction 3-phosphoshikimate + phosphoenolpyruvate = 5-O-(1-carboxyvinyl)-3-phosphoshikimate + phosphate. It participates in metabolic intermediate biosynthesis; chorismate biosynthesis; chorismate from D-erythrose 4-phosphate and phosphoenolpyruvate: step 6/7. In terms of biological role, catalyzes the transfer of the enolpyruvyl moiety of phosphoenolpyruvate (PEP) to the 5-hydroxyl of shikimate-3-phosphate (S3P) to produce enolpyruvyl shikimate-3-phosphate and inorganic phosphate. The polypeptide is 3-phosphoshikimate 1-carboxyvinyltransferase (Bartonella henselae (strain ATCC 49882 / DSM 28221 / CCUG 30454 / Houston 1) (Rochalimaea henselae)).